Here is a 186-residue protein sequence, read N- to C-terminus: Glycerol-3-phosphate acyltransferase 1 (186 aa).

5 helical membrane-spanning segments follow: residues 9–29, 58–78, 85–105, 121–141, and 161–181; these read MQFLYLVASYLFGNILTAYIV, GYFVATFLGDAIKGAIVVSIA, STFVMLTLLAVIIGHIYPVLF, IAFDYLIALTLVAVFIIFYLI, and ILYSYSIVTTILSALIIVLIL.

It belongs to the PlsY family. As to quaternary structure, probably interacts with PlsX.

Its subcellular location is the cell membrane. The catalysed reaction is an acyl phosphate + sn-glycerol 3-phosphate = a 1-acyl-sn-glycero-3-phosphate + phosphate. The protein operates within lipid metabolism; phospholipid metabolism. Functionally, catalyzes the transfer of an acyl group from acyl-phosphate (acyl-PO(4)) to glycerol-3-phosphate (G3P) to form lysophosphatidic acid (LPA). This enzyme utilizes acyl-phosphate as fatty acyl donor, but not acyl-CoA or acyl-ACP. This Bacillus cereus (strain ZK / E33L) protein is Glycerol-3-phosphate acyltransferase 1.